The following is a 148-amino-acid chain: 3-hydroxyacyl-[acyl-carrier-protein] dehydratase FabZ (148 aa).

The active site involves histidine 55.

This sequence belongs to the thioester dehydratase family. FabZ subfamily.

It localises to the cytoplasm. The catalysed reaction is a (3R)-hydroxyacyl-[ACP] = a (2E)-enoyl-[ACP] + H2O. Its function is as follows. Involved in unsaturated fatty acids biosynthesis. Catalyzes the dehydration of short chain beta-hydroxyacyl-ACPs and long chain saturated and unsaturated beta-hydroxyacyl-ACPs. This Haemophilus influenzae (strain ATCC 51907 / DSM 11121 / KW20 / Rd) protein is 3-hydroxyacyl-[acyl-carrier-protein] dehydratase FabZ.